The following is a 410-amino-acid chain: Peptidase T (410 aa).

Zn(2+) is bound at residue His79. The active site involves Asp81. Position 142 (Asp142) interacts with Zn(2+). Catalysis depends on Glu176, which acts as the Proton acceptor. The Zn(2+) site is built by Glu177, Asp199, and His381.

This sequence belongs to the peptidase M20B family. It depends on Zn(2+) as a cofactor.

The protein resides in the cytoplasm. The enzyme catalyses Release of the N-terminal residue from a tripeptide.. Functionally, cleaves the N-terminal amino acid of tripeptides. This chain is Peptidase T, found in Listeria monocytogenes serotype 4b (strain F2365).